Reading from the N-terminus, the 718-residue chain is Sec-independent protein translocase protein TatCt (718 aa).

8 consecutive transmembrane segments (helical) span residues 34–54 (VFIVFLVGFLGTFYALRLYVW), 84–104 (ILLQAKIGLVVGVLFALPPFI), 137–157 (LFAAGVAYGYFVFFPFTFAFL), 178–198 (FIFLLTLSFGLASQLPLAMTG), 214–231 (WRHAIVGIFAFGALFTPP), 234–254 (FTQIMWAVPVILLYAFSLYLA), 280–300 (LAGVGVVVGLLVYAFYEYGGV), and 325–345 (LGAFVVAGGFVGLAFGLAYLV). The interval 421–451 (REAEAADAEDEPGELEDRTTRAGGAFVSELT) is disordered. Residues 425-434 (AADAEDEPGE) show a composition bias toward acidic residues. Helical transmembrane passes span 478–498 (AFWVVGWFMLVLATTFGWLYT), 539–559 (FSTILAVLATLPLVAYFVWPA), 572–592 (TVFVWTGALAGGLLGGFALGY), 621–641 (FFWLIFFTTAGIGLLADVPIL), 661–681 (EVTVFILAISAVFTPASITTM), and 682–702 (FMVTLPLMAAYGVGLGVLFVL).

The protein belongs to the TatC family. In terms of assembly, forms a complex with TatA.

The protein resides in the cell membrane. Functionally, part of the twin-arginine translocation (Tat) system that transports large folded proteins containing a characteristic twin-arginine motif in their signal peptide across membranes. This chain is Sec-independent protein translocase protein TatCt, found in Haloferax volcanii (strain ATCC 29605 / DSM 3757 / JCM 8879 / NBRC 14742 / NCIMB 2012 / VKM B-1768 / DS2) (Halobacterium volcanii).